We begin with the raw amino-acid sequence, 606 residues long: Elongation factor 4 (606 aa).

The tr-type G domain maps to 7–189 (SRIRNFCIIA…AVVDRVPPPK (183 aa)). GTP-binding positions include 19–24 (DHGKST) and 136–139 (NKID).

The protein belongs to the TRAFAC class translation factor GTPase superfamily. Classic translation factor GTPase family. LepA subfamily.

It is found in the cell inner membrane. The enzyme catalyses GTP + H2O = GDP + phosphate + H(+). Its function is as follows. Required for accurate and efficient protein synthesis under certain stress conditions. May act as a fidelity factor of the translation reaction, by catalyzing a one-codon backward translocation of tRNAs on improperly translocated ribosomes. Back-translocation proceeds from a post-translocation (POST) complex to a pre-translocation (PRE) complex, thus giving elongation factor G a second chance to translocate the tRNAs correctly. Binds to ribosomes in a GTP-dependent manner. The protein is Elongation factor 4 of Parasynechococcus marenigrum (strain WH8102).